Here is a 75-residue protein sequence, read N- to C-terminus: Small ribosomal subunit protein bS18c (75 aa).

This sequence belongs to the bacterial ribosomal protein bS18 family. In terms of assembly, part of the 30S ribosomal subunit.

It localises to the plastid. The chain is Small ribosomal subunit protein bS18c from Aneura mirabilis (Parasitic liverwort).